A 274-amino-acid chain; its full sequence is Nickel/cobalt efflux system RcnA (274 aa).

The Periplasmic portion of the chain corresponds to 1–12 (MTEFTTLLQQGN). Residues 13–33 (AWFFIPSVILLGALHGLEPGH) form a helical membrane-spanning segment. The Cytoplasmic segment spans residues 34–56 (SKTMMAAFIIAIKGTIKQAVMLG). Residues 57-77 (LAATISHTAVVWLIAFGGMVI) traverse the membrane as a helical segment. Topologically, residues 78–86 (SKRFTAQSA) are periplasmic. A helical membrane pass occupies residues 87–107 (EPWLQLISAVIIISTAFWMFW). Over 108–174 (RTWRGERNWL…FDGREVTNWQ (67 aa)) the chain is Cytoplasmic. Residues 127–153 (HHHHDHEHHHDHGHHHHHEHGEYQDAH) form a disordered region. The segment covering 129–144 (HHDHEHHHDHGHHHHH) has biased composition (basic residues). Residues 175-195 (ILLFGLTGGLIPCPAAITVLL) traverse the membrane as a helical segment. Topologically, residues 196–209 (ICIQLKALTLGATL) are periplasmic. Residues 210 to 230 (VVSFSIGLALTLVTVGVGAAI) traverse the membrane as a helical segment. Residues 231–251 (SVQQVAKRWSGFNTLAKRAPY) are Cytoplasmic-facing. Residues 252 to 272 (FSSLLIGLVGVYMGVHGFMGI) form a helical membrane-spanning segment. The Periplasmic portion of the chain corresponds to 273-274 (MR).

This sequence belongs to the NiCoT transporter (TC 2.A.52) family. RcnA subfamily.

It localises to the cell inner membrane. Efflux system for nickel and cobalt. This chain is Nickel/cobalt efflux system RcnA (rcnA), found in Escherichia coli O9:H4 (strain HS).